We begin with the raw amino-acid sequence, 245 residues long: Ribosomal RNA small subunit methyltransferase G (245 aa).

Residues Gly-85, Phe-90, 108–110 (DST), 136–137 (AE), and Arg-155 each bind S-adenosyl-L-methionine.

Belongs to the methyltransferase superfamily. RNA methyltransferase RsmG family.

The protein localises to the cytoplasm. In terms of biological role, specifically methylates the N7 position of a guanine in 16S rRNA. This chain is Ribosomal RNA small subunit methyltransferase G, found in Trichormus variabilis (strain ATCC 29413 / PCC 7937) (Anabaena variabilis).